The following is a 383-amino-acid chain: MPRGFLVKRNKKATPVSYRVRSEEDEQGAFVAQDVPCARRPVSPVQFGNPETVYRAMYSPTRPVSREHERACLERRFNLGSPISAESFPAAPNCSDQAPVDLKIGTSNSNRTGTTVTTKRPASDTERKGKPASKKAKAMRKLQFEDEMTTSPVLGLKIKEGPVEQKPRSQCASGDKPLGEFVCQLCREAYADPFSLAQHKCSRIVRIEYRCPECDKLFSCPANLASHRRWHKPKQSAESNKTPAPEKEETSSDRDTPSPGLSESGSEDGLYDCQHCGKKFKRQAYLKKHVTAHHDAPEKPQSHAPLNLSASECHLCPVCGENFPSRMSQERHIRLQHSAQVYPCKYCPAMFYSSPGLTRHINKCHPSENRQVILLQMPVRPAC.

An SNAG domain region spans residues 1–20 (MPRGFLVKRNKKATPVSYRV). 2 disordered regions span residues 99–141 (PVDL…AMRK) and 229–269 (RWHK…SEDG). Residues 105-120 (GTSNSNRTGTTVTTKR) are compositionally biased toward polar residues. Residues 130–140 (KPASKKAKAMR) show a composition bias toward basic residues. The segment at 209–231 (YRCPECDKLFSCPANLASHRRWH) adopts a C2H2-type 1 zinc-finger fold. The span at 244–256 (APEKEETSSDRDT) shows a compositional bias: basic and acidic residues. Residues 271-295 (YDCQHCGKKFKRQAYLKKHVTAHHD) form a C2H2-type 2; degenerate zinc finger. 2 consecutive C2H2-type zinc fingers follow at residues 314–337 (HLCPVCGENFPSRMSQERHIRLQH) and 342–365 (YPCKYCPAMFYSSPGLTRHINKCH).

It belongs to the INSM1 family.

Its subcellular location is the nucleus. Its function is as follows. May act as a transcriptional regulator. May play a role in neurogenesis and neuroendocrine cell differentiation during embryonic development. In Danio rerio (Zebrafish), this protein is Insulinoma-associated protein 1a (insm1a).